Consider the following 596-residue polypeptide: SUN domain-containing protein 4 (596 aa).

A helical transmembrane segment spans residues 28–48; sequence VSLSLVFLIWGLVFLSTLWIS. Disordered regions lie at residues 58–98 and 139–158; these read LVDS…LSSD and KQSE…TTGS. A compositionally biased stretch (acidic residues) spans 66–77; sequence EPDDERADETAE. Polar residues-rich tracts occupy residues 80 to 95 and 141 to 158; these read DATS…NPGL and SEIN…TTGS. An SUN domain is found at 179–343; the sequence is SNSRDKSLSG…SLLEVYGVDA (165 aa). The segment covering 366-396 has biased composition (basic and acidic residues); it reads DTEQKEKKTMQAKESFESDEDKSKQKEKEQE. Residues 366–410 are disordered; the sequence is DTEQKEKKTMQAKESFESDEDKSKQKEKEQEASPENAVVKDEVSL. A coiled-coil region spans residues 475–544; sequence ASKREKEVET…LERLEWMEKK (70 aa). Helical transmembrane passes span 545 to 565 and 576 to 596; these read GVVV…AVVF and GGLA…ILSL.

As to quaternary structure, forms homomers and heteromers with SUN3. Interacts with SUN1, SUN2 and TIK.

The protein resides in the nucleus membrane. It localises to the endoplasmic reticulum membrane. In terms of biological role, encodes a member of the mid-SUN subfamily of SUN-domain proteins that is localized to both the nuclear envelope and the ER. It is involved in early seed development and nuclear morphology. [TAIR]. The polypeptide is SUN domain-containing protein 4 (Arabidopsis thaliana (Mouse-ear cress)).